The primary structure comprises 324 residues: Quinolinate synthase (324 aa).

Positions 44 and 62 each coordinate iminosuccinate. C107 contributes to the [4Fe-4S] cluster binding site. Iminosuccinate-binding positions include 133–135 (YVN) and S150. C192 provides a ligand contact to [4Fe-4S] cluster. Iminosuccinate is bound by residues 218-220 (HPE) and T235. C278 serves as a coordination point for [4Fe-4S] cluster.

The protein belongs to the quinolinate synthase family. Type 2 subfamily. [4Fe-4S] cluster serves as cofactor.

The protein localises to the cytoplasm. It carries out the reaction iminosuccinate + dihydroxyacetone phosphate = quinolinate + phosphate + 2 H2O + H(+). It participates in cofactor biosynthesis; NAD(+) biosynthesis; quinolinate from iminoaspartate: step 1/1. In terms of biological role, catalyzes the condensation of iminoaspartate with dihydroxyacetone phosphate to form quinolinate. This Leptospira interrogans serogroup Icterohaemorrhagiae serovar copenhageni (strain Fiocruz L1-130) protein is Quinolinate synthase.